Here is a 480-residue protein sequence, read N- to C-terminus: MMWTALLLVGLSILVIVLYGRRTRRRNEPPLDKGMIPWLGHALEFGKDAAKFLTRMKEKHGDIFTVRAAGLYITVLLDSNCYDAVLSDVASLDQTSYAQVLMKRIFNMILPSHNPESEKKRAEMHFQGASLTQLSNSMQNNLRLLMTPSEMGLKTSEWKKDGLFNLCYSLLFKTGYLTVFGAENNDSAALTQIYEEFRRFDKLLPKLARTTINKEEKQIASAAREKLWKWLTPSGLDRKPREQSWLGSYVKQLQDEGIDAEMQRRAMLLQLWVTQGNAGPAAFWVMGYLLTHPEALRAVREEIQGGKHLRLEERQKNTPVFDSVLWETLRLTAAALITRDVTQDKKIRLSNGQEYHLRRGDRLCVFPFISPQMDPQIHQQPEMFQFDRFLNADRTEKKDFFKNGARVKYPSVPWGTEDNLCPGRHFAVHAIKELVFTILTRFDVELCDKNATVPLVDPSRYGFGILQPAGDLEIRYRIRF.

The chain crosses the membrane as a helical span at residues 1–21 (MMWTALLLVGLSILVIVLYGR). Residues Arg-104, Leu-110, Asn-277, 338–339 (TR), and Arg-362 contribute to the substrate site. Cys-421 contacts heme.

This sequence belongs to the cytochrome P450 family. Heme is required as a cofactor.

It localises to the endoplasmic reticulum membrane. It carries out the reaction prostaglandin H2 = prostaglandin I2. The catalysed reaction is a hydroperoxyeicosatetraenoate = an oxoeicosatetraenoate + H2O. The enzyme catalyses (15S)-hydroperoxy-(5Z,8Z,11Z,13E)-eicosatetraenoate = 15-oxo-(5Z,8Z,11Z,13E)-eicosatetraenoate + H2O. It catalyses the reaction (15S)-hydroperoxy-(5Z,8Z,11Z,13E)-eicosatetraenoate + AH2 = (15S)-hydroxy-(5Z,8Z,11Z,13E)-eicosatetraenoate + A + H2O. Functionally, catalyzes the isomerization of prostaglandin H2 to prostacyclin (= prostaglandin I2). Its function is as follows. Catalyzes the biosynthesis and metabolism of eicosanoids. Catalyzes the isomerization of prostaglandin H2 to prostacyclin (= prostaglandin I2), a potent mediator of vasodilation and inhibitor of platelet aggregation. Additionally, displays dehydratase activity, toward hydroperoxyeicosatetraenoates (HPETEs), especially toward (15S)-hydroperoxy-(5Z,8Z,11Z,13E)-eicosatetraenoate (15(S)-HPETE). The protein is Prostacyclin synthase of Danio rerio (Zebrafish).